We begin with the raw amino-acid sequence, 265 residues long: Hydroxyethylthiazole kinase (265 aa).

Met-50 provides a ligand contact to substrate. 2 residues coordinate ATP: Arg-125 and Thr-171. Gly-198 is a substrate binding site.

The protein belongs to the Thz kinase family. The cofactor is Mg(2+).

The enzyme catalyses 5-(2-hydroxyethyl)-4-methylthiazole + ATP = 4-methyl-5-(2-phosphooxyethyl)-thiazole + ADP + H(+). It participates in cofactor biosynthesis; thiamine diphosphate biosynthesis; 4-methyl-5-(2-phosphoethyl)-thiazole from 5-(2-hydroxyethyl)-4-methylthiazole: step 1/1. Catalyzes the phosphorylation of the hydroxyl group of 4-methyl-5-beta-hydroxyethylthiazole (THZ). The polypeptide is Hydroxyethylthiazole kinase (Cronobacter sakazakii (strain ATCC BAA-894) (Enterobacter sakazakii)).